We begin with the raw amino-acid sequence, 126 residues long: Aspartate 1-decarboxylase 1 (126 aa).

Serine 25 functions as the Schiff-base intermediate with substrate; via pyruvic acid in the catalytic mechanism. Serine 25 carries the post-translational modification Pyruvic acid (Ser). Threonine 57 lines the substrate pocket. The active-site Proton donor is the tyrosine 58. 73 to 75 (GSA) is a binding site for substrate.

Belongs to the PanD family. As to quaternary structure, heterooctamer of four alpha and four beta subunits. Requires pyruvate as cofactor. In terms of processing, is synthesized initially as an inactive proenzyme, which is activated by self-cleavage at a specific serine bond to produce a beta-subunit with a hydroxyl group at its C-terminus and an alpha-subunit with a pyruvoyl group at its N-terminus.

It localises to the cytoplasm. The catalysed reaction is L-aspartate + H(+) = beta-alanine + CO2. It participates in cofactor biosynthesis; (R)-pantothenate biosynthesis; beta-alanine from L-aspartate: step 1/1. In terms of biological role, catalyzes the pyruvoyl-dependent decarboxylation of aspartate to produce beta-alanine. The sequence is that of Aspartate 1-decarboxylase 1 from Polaromonas sp. (strain JS666 / ATCC BAA-500).